The following is a 385-amino-acid chain: Multicilin (385 aa).

The tract at residues methionine 1–serine 130 is necessary and sufficient for its degradation during the cell cycle. Residues serine 86–alanine 111 are disordered. Residues serine 131–serine 385 are necessary and sufficient for proper nuclear localization. Residues proline 173 to glutamine 245 are necessary and sufficient for interaction with GMNN and sufficient for homodimerization. Residues glutamate 179–leucine 227 are a coiled coil. Residues alanine 294 to leucine 319 are disordered.

The protein belongs to the geminin family. As to quaternary structure, heterodimer (via coiled-coil domain) with GMNN (via coiled-coil domain); targets GMNN to the nucleus. Can form homodimers (in vitro, via coiled-coil domain), but these are much less stable than the heterodimer formed with GMNN.

The protein localises to the nucleus. Functionally, transcription regulator specifically required for multiciliate cell differentiation. Acts in a multiprotein complex containing E2F4 and E2F5 that binds and activates genes required for centriole biogenesis. Required for the deuterosome-mediated acentriolar pathway. Plays a role in mitotic cell cycle progression by promoting cell cycle exit. Modulates GMNN activity by reducing its affinity for CDT1. This is Multicilin from Homo sapiens (Human).